A 135-amino-acid polypeptide reads, in one-letter code: Large ribosomal subunit protein mL41 (135 aa).

The N-terminal 13 residues, 1–13, are a transit peptide targeting the mitochondrion; that stretch reads MGVLSALARGFVR.

Belongs to the mitochondrion-specific ribosomal protein mL41 family. Component of the mitochondrial ribosome large subunit (39S) which comprises a 16S rRNA and about 50 distinct proteins.

It localises to the mitochondrion. Its function is as follows. Component of the mitochondrial ribosome large subunit. Also involved in apoptosis and cell cycle. The polypeptide is Large ribosomal subunit protein mL41 (mrpl41) (Danio rerio (Zebrafish)).